We begin with the raw amino-acid sequence, 480 residues long: Iroquois-class homeodomain protein IRX-1 (480 aa).

The segment at residues 127 to 189 (DPGRPKNATR…NARRRLKKEN (63 aa)) is a DNA-binding region (homeobox; TALE-type). Disordered regions lie at residues 190-285 (KVTW…LGLV), 318-354 (SLAETATSPDGAPKASPPPPSSHASAHGPPSGSPLQH), and 401-480 (PHGP…LPSA). Positions 210 to 232 (TEGDPEKAEDDEEIDLESIDIDQ) are enriched in acidic residues. A Phosphoserine modification is found at S241. Positions 254–263 (ARVAPPASAR) are enriched in low complexity. A compositionally biased stretch (polar residues) spans 264-280 (DQSSPLSAAETLKSQDS). Residues 339 to 351 (SHASAHGPPSGSP) show a composition bias toward low complexity.

Belongs to the TALE/IRO homeobox family. As to expression, expressed in specific and overlapping patterns with Irx1 and Irx2 in the developing and adult metanephric kidney. In the adult metanephros, renal expression is found in the loop of Henle in the S3 proximal tubule segment and in the thick ascending limb (TAL) of the distal tubule.

Its subcellular location is the nucleus. The polypeptide is Iroquois-class homeodomain protein IRX-1 (Irx1) (Mus musculus (Mouse)).